The chain runs to 325 residues: uncharacterized protein (325 aa).

The active-site Proton donor is the tyrosine 59. Histidine 117 contacts substrate.

It belongs to the aldo/keto reductase family.

It is found in the cytoplasm. The protein localises to the nucleus. This is an uncharacterized protein from Schizosaccharomyces pombe (strain 972 / ATCC 24843) (Fission yeast).